A 155-amino-acid chain; its full sequence is 6,7-dimethyl-8-ribityllumazine synthase (155 aa).

5-amino-6-(D-ribitylamino)uracil contacts are provided by residues phenylalanine 23, 57 to 59 (AFE), and 81 to 83 (AVI). 86–87 (ST) provides a ligand contact to (2S)-2-hydroxy-3-oxobutyl phosphate. Histidine 89 acts as the Proton donor in catalysis. Position 114 (phenylalanine 114) interacts with 5-amino-6-(D-ribitylamino)uracil. (2S)-2-hydroxy-3-oxobutyl phosphate is bound at residue arginine 128.

Belongs to the DMRL synthase family.

It carries out the reaction (2S)-2-hydroxy-3-oxobutyl phosphate + 5-amino-6-(D-ribitylamino)uracil = 6,7-dimethyl-8-(1-D-ribityl)lumazine + phosphate + 2 H2O + H(+). It functions in the pathway cofactor biosynthesis; riboflavin biosynthesis; riboflavin from 2-hydroxy-3-oxobutyl phosphate and 5-amino-6-(D-ribitylamino)uracil: step 1/2. Functionally, catalyzes the formation of 6,7-dimethyl-8-ribityllumazine by condensation of 5-amino-6-(D-ribitylamino)uracil with 3,4-dihydroxy-2-butanone 4-phosphate. This is the penultimate step in the biosynthesis of riboflavin. This is 6,7-dimethyl-8-ribityllumazine synthase from Geobacter sulfurreducens (strain ATCC 51573 / DSM 12127 / PCA).